A 436-amino-acid chain; its full sequence is Probable cinnamyl alcohol dehydrogenase 8B (436 aa).

Cysteine 120 is a Zn(2+) binding site. Residue threonine 122 coordinates NADP(+). 7 residues coordinate Zn(2+): histidine 142, glutamate 143, cysteine 173, cysteine 176, cysteine 179, cysteine 187, and cysteine 236. NADP(+) contacts are provided by residues threonine 240, 261–266 (GLGGLG), 284–289 (STSPGK), threonine 324, glycine 348, and 371–373 (NCV).

Belongs to the zinc-containing alcohol dehydrogenase family. In terms of assembly, homodimer. The cofactor is Zn(2+).

The catalysed reaction is (E)-cinnamyl alcohol + NADP(+) = (E)-cinnamaldehyde + NADPH + H(+). It carries out the reaction (E)-coniferol + NADP(+) = (E)-coniferaldehyde + NADPH + H(+). It catalyses the reaction (E)-sinapyl alcohol + NADP(+) = (E)-sinapaldehyde + NADPH + H(+). The enzyme catalyses (E)-4-coumaroyl alcohol + NADP(+) = (E)-4-coumaraldehyde + NADPH + H(+). The catalysed reaction is (E)-caffeyl alcohol + NADP(+) = (E)-caffeyl aldehyde + NADPH + H(+). It participates in aromatic compound metabolism; phenylpropanoid biosynthesis. Involved in lignin biosynthesis. Catalyzes the final step specific for the production of lignin monomers. Catalyzes the NADPH-dependent reduction of coniferaldehyde, 5-hydroxyconiferaldehyde, sinapaldehyde, 4-coumaraldehyde and caffeyl aldehyde to their respective alcohols. The sequence is that of Probable cinnamyl alcohol dehydrogenase 8B from Oryza sativa subsp. japonica (Rice).